The primary structure comprises 536 residues: SNW domain-containing protein 1 (536 aa).

The interval 1–46 (MALTSFLPAPTQLSQDQLEAEEKARSQRSRQTSLVSSRREPPPYGY) is disordered. Ala-2 is subject to N-acetylalanine. Ser-14 is modified (phosphoserine). A Glycyl lysine isopeptide (Lys-Gly) (interchain with G-Cter in SUMO2) cross-link involves residue Lys-23. The interaction with PPIL1 stretch occupies residues 59–79 (GDGGAFPEIHVAQYPLDMGRK). Residues Lys-81, Lys-97, Lys-115, Lys-122, Lys-141, Lys-158, and Lys-170 each participate in a glycyl lysine isopeptide (Lys-Gly) (interchain with G-Cter in SUMO2) cross-link. Positions 174 to 339 (AQYIRYTPSQ…KARERRAGIK (166 aa)) are SNW. A phosphoserine mark is found at Ser-182 and Ser-190. Lys-193 is covalently cross-linked (Glycyl lysine isopeptide (Lys-Gly) (interchain with G-Cter in SUMO2)). The disordered stretch occupies residues 209–233 (PPRFKINKKIPRGPPSPPAPVMHSP). A phosphoserine mark is found at Ser-224, Ser-232, and Ser-234. Residues Lys-240, Lys-258, Lys-286, Lys-339, Lys-344, Lys-416, and Lys-441 each participate in a glycyl lysine isopeptide (Lys-Gly) (interchain with G-Cter in SUMO2) cross-link. The disordered stretch occupies residues 311–386 (KMAQKEKEKH…RSKLQRNENR (76 aa)). Position 446 is a phosphoserine (Ser-446). Lys-452 participates in a covalent cross-link: Glycyl lysine isopeptide (Lys-Gly) (interchain with G-Cter in SUMO2). 2 stretches are compositionally biased toward basic and acidic residues: residues 470–489 (NRFVPDKEFSGSDRRQRGRE) and 503–530 (KFLEEAKQHGGSKRPSDSSRPKEHEHEG). A disordered region spans residues 470–536 (NRFVPDKEFS…EHEGKKRRKE (67 aa)). Phosphoserine occurs at positions 479 and 481. A Glycyl lysine isopeptide (Lys-Gly) (interchain with G-Cter in SUMO2) cross-link involves residue Lys-509.

Belongs to the SNW family. As to quaternary structure, identified in the spliceosome C complex. Associates with U4/U6-U5 tri-small nuclear ribonucleoproteins (U4/U6-U5 tri-snRNPs). Component of the minor spliceosome, which splices U12-type introns. Interacts with SKI, SMAD2,SMAD3, RBPJ, RB1, PABPN1, MAGEA1, SIRT1, FOXN3, U2AF2, DAXX and ATP1B4. Interacts with PPIL1. Interacts with VDR and RXRA; preferentially associates with VDR:RXRA heterodimers. Interacts with NCOR2. Interacts with MAML1. Interacts with NOTCH1 NICD; the interaction involves multimerized NOTCH1 NICD. Forms a complex with NOTCH1 NICD and MAML1; the association is dissociated by RBPJ. Associates with positive transcription elongation factor b (P-TEFb). Component of the SNARP complex which consists at least of SNIP1, SNW1, THRAP3, BCLAF1 and PNN. (Microbial infection) Interacts with human papillomavirus type-16 (HPV16) E7 protein. In terms of assembly, (Microbial infection) Interacts with EBV EBNA2; EBNA2 competes with NCOR2 for interaction with SNW1.

The protein resides in the nucleus. Involved in pre-mRNA splicing as component of the spliceosome. As a component of the minor spliceosome, involved in the splicing of U12-type introns in pre-mRNAs. Required for the specific splicing of CDKN1A pre-mRNA; the function probably involves the recruitment of U2AF2 to the mRNA. May recruit PPIL1 to the spliceosome. May be involved in cyclin-D1/CCND1 mRNA stability through the SNARP complex which associates with both the 3'end of the CCND1 gene and its mRNA. Involved in transcriptional regulation. Modulates TGF-beta-mediated transcription via association with SMAD proteins, MYOD1-mediated transcription via association with PABPN1, RB1-mediated transcriptional repression, and retinoid-X receptor (RXR)- and vitamin D receptor (VDR)-dependent gene transcription in a cell line-specific manner probably involving coactivators NCOA1 and GRIP1. Is involved in NOTCH1-mediated transcriptional activation. Binds to multimerized forms of Notch intracellular domain (NICD) and is proposed to recruit transcriptional coactivators such as MAML1 to form an intermediate preactivation complex which associates with DNA-bound CBF-1/RBPJ to form a transcriptional activation complex by releasing SNW1 and redundant NOTCH1 NICD. Functionally, (Microbial infection) Is recruited by HIV-1 Tat to Tat:P-TEFb:TAR RNA complexes and is involved in Tat transcription by recruitment of MYC, MEN1 and TRRAP to the HIV promoter. In terms of biological role, (Microbial infection) Proposed to be involved in transcriptional activation by EBV EBNA2 of CBF-1/RBPJ-repressed promoters. The chain is SNW domain-containing protein 1 (SNW1) from Homo sapiens (Human).